The primary structure comprises 955 residues: 2-oxoglutarate dehydrogenase E1 component (955 aa).

Belongs to the alpha-ketoglutarate dehydrogenase family. As to quaternary structure, homodimer. Part of the 2-oxoglutarate dehydrogenase (OGDH) complex composed of E1 (2-oxoglutarate dehydrogenase), E2 (dihydrolipoamide succinyltransferase) and E3 (dihydrolipoamide dehydrogenase); the complex contains multiple copies of the three enzymatic components (E1, E2 and E3). It depends on thiamine diphosphate as a cofactor.

The enzyme catalyses N(6)-[(R)-lipoyl]-L-lysyl-[protein] + 2-oxoglutarate + H(+) = N(6)-[(R)-S(8)-succinyldihydrolipoyl]-L-lysyl-[protein] + CO2. Functionally, E1 component of the 2-oxoglutarate dehydrogenase (OGDH) complex which catalyzes the decarboxylation of 2-oxoglutarate, the first step in the conversion of 2-oxoglutarate to succinyl-CoA and CO(2). This Bacillus cereus (strain ATCC 10987 / NRS 248) protein is 2-oxoglutarate dehydrogenase E1 component.